Reading from the N-terminus, the 473-residue chain is Sulfhydrylase-like protein lolC2 (473 aa).

K226 is modified (N6-(pyridoxal phosphate)lysine).

The protein belongs to the trans-sulfuration enzymes family. Pyridoxal 5'-phosphate is required as a cofactor.

It participates in alkaloid biosynthesis. Its function is as follows. Sulfhydrylase-like protein; part of the gene cluster that mediates the biosynthesis of loline alkaloids, potent insecticidal agents composed of a pyrrolizidine ring system and an uncommon ether bridge linking carbons 2 and 7. Lolines are structurally differentiated by the various modifications of the L-amino group and include norloline, loline, N-methylloline, N-acetylloline, N-acetylnorloline, and N-formylloline. The first committed step is the condensation of O-acetyl-L-homoserine (derived from L-aspartic acid) and L-proline, probably catalyzed by the gamma-type pyridoxal 5'-phosphate(PLP)-dependent enzyme lolC, to give the diamino diacid, NACPP. Ensuing cyclization, decarboxylation, and acetylation steps yield 1-exo-acetamidopyrrolizidine (AcAP). LolO is required for installation of the ether bridge upon the pathway intermediate, 1-exo-acetamidopyrrolizidine (AcAP). In sequential 2-oxoglutarate- and O(2)-consuming steps, lolO removes hydrogens from C2 and C7 of AcAP to form both carbon-oxygen bonds in N-acetylnorloline (NANL), the precursor to all other lolines. The enzymes lolD, lolE, lolF and lolT have also been proposed to be involved in the ether-bridge installation. Further processing of the exocyclic moiety of NANL by fungal N-acetamidase (LolN), methyltransferase (LolM), and cytochrome P450 (LolP) enzymes, with occasional involvement of a plant acetyltransferase, generates the other known lolines. LolN transforms NANL to norlonine which is monomethylated and dimethylated to respectively lonine and N-methyllonine (NML) by lolM. LolP catalyzes hydroxylation of the methyl group in N-methylloline (NML) and further oxygenation to N-formylloline (NFL). A plant acetyltransferase is responsible for the acetylation of loline to form N-acetylloline (NAL). LolA might interact with aspartate kinase to prevent feedback inhibition of its activity by these end products and thereby promote production of L-homoserine from L-aspartate. The polypeptide is Sulfhydrylase-like protein lolC2 (Epichloe uncinata (Endophyte fungus)).